A 494-amino-acid polypeptide reads, in one-letter code: Lipopolysaccharide core galacturonosyltransferase RgtB (494 aa).

10 helical membrane-spanning segments follow: residues 9–29 (ISWIFALLAAYFVLQVGVRLA), 74–94 (LTALSIVKNLLLFISYLLYGL), 104–124 (ALVAIATLGLLTIPQMAFEMQ), 127–147 (LTHTVAVFFSASIFFYGFIRS), 156–176 (YLIAGIGIGFGLLAKYNFAIL), 197–217 (WRLGLTAAVALVITLPHLFWL), 251–271 (LALAIISFAALTVAVFAIVFG), 291–311 (MMLVFLAGILLLIVFGGAAGI), 316–336 (LVPMLFILPLYFCLKIEAAGV), and 345–365 (FIPVVAVIMIGVPAALYGSVA).

This sequence belongs to the glycosyltransferase 83 family.

The protein resides in the cell inner membrane. It functions in the pathway bacterial outer membrane biogenesis; LPS core biosynthesis. Its function is as follows. Involved in the modification of the lipopolysaccharide (LPS) inner core. Catalyzes the transfer of a galacturonic acid (GalA) residue to the 5-position of the outer Kdo (3-deoxy-D-manno-octulosonic acid) residue of the LPS inner core, using dodecaprenyl phosphate-GalA as the donor substrate. Acts after the other GalA transferase RgtA. This chain is Lipopolysaccharide core galacturonosyltransferase RgtB, found in Rhizobium johnstonii (strain DSM 114642 / LMG 32736 / 3841) (Rhizobium leguminosarum bv. viciae).